Here is a 140-residue protein sequence, read N- to C-terminus: Small ribosomal subunit protein eS12 (140 aa).

The protein belongs to the eukaryotic ribosomal protein eS12 family. As to quaternary structure, part of the small subunit (SSU) processome, composed of more than 70 proteins and the RNA chaperone small nucleolar RNA (snoRNA) U3. Subunit of the 40S ribosomal complex.

It is found in the nucleus. The protein resides in the nucleolus. Its function is as follows. Part of the small subunit (SSU) processome, first precursor of the small eukaryotic ribosomal subunit. During the assembly of the SSU processome in the nucleolus, many ribosome biogenesis factors, an RNA chaperone and ribosomal proteins associate with the nascent pre-rRNA and work in concert to generate RNA folding, modifications, rearrangements and cleavage as well as targeted degradation of pre-ribosomal RNA by the RNA exosome. Subunit of the 40S ribosomal complex. Involved in cold-warm shock-induced translocation of the RNA exosome components from the nucleolus to nucleoplasm. This Caenorhabditis elegans protein is Small ribosomal subunit protein eS12 (rps-12).